A 205-amino-acid polypeptide reads, in one-letter code: Holliday junction branch migration complex subunit RuvA (205 aa).

The domain I stretch occupies residues 1–64; the sequence is MIGKLKGLID…EDQIKLFGFR (64 aa). The tract at residues 65-143 is domain II; sequence SDVEREWFRL…AFADVDPGVI (79 aa). The interval 144–154 is flexible linker; it reads RLSGAIEDSRA. The tract at residues 154–205 is domain III; sequence APQPIADAISALINLGYGQPQAAAAIAAASRAAGDKAETAQLIRLGLKELAK.

This sequence belongs to the RuvA family. Homotetramer. Forms an RuvA(8)-RuvB(12)-Holliday junction (HJ) complex. HJ DNA is sandwiched between 2 RuvA tetramers; dsDNA enters through RuvA and exits via RuvB. An RuvB hexamer assembles on each DNA strand where it exits the tetramer. Each RuvB hexamer is contacted by two RuvA subunits (via domain III) on 2 adjacent RuvB subunits; this complex drives branch migration. In the full resolvosome a probable DNA-RuvA(4)-RuvB(12)-RuvC(2) complex forms which resolves the HJ.

The protein localises to the cytoplasm. In terms of biological role, the RuvA-RuvB-RuvC complex processes Holliday junction (HJ) DNA during genetic recombination and DNA repair, while the RuvA-RuvB complex plays an important role in the rescue of blocked DNA replication forks via replication fork reversal (RFR). RuvA specifically binds to HJ cruciform DNA, conferring on it an open structure. The RuvB hexamer acts as an ATP-dependent pump, pulling dsDNA into and through the RuvAB complex. HJ branch migration allows RuvC to scan DNA until it finds its consensus sequence, where it cleaves and resolves the cruciform DNA. This Bradyrhizobium sp. (strain BTAi1 / ATCC BAA-1182) protein is Holliday junction branch migration complex subunit RuvA.